The following is a 130-amino-acid chain: Small ribosomal subunit protein uS11 (130 aa).

The protein belongs to the universal ribosomal protein uS11 family. As to quaternary structure, part of the 30S ribosomal subunit. Interacts with proteins S7 and S18. Binds to IF-3.

Located on the platform of the 30S subunit, it bridges several disparate RNA helices of the 16S rRNA. Forms part of the Shine-Dalgarno cleft in the 70S ribosome. The sequence is that of Small ribosomal subunit protein uS11 from Shewanella denitrificans (strain OS217 / ATCC BAA-1090 / DSM 15013).